The chain runs to 331 residues: Ribose-phosphate pyrophosphokinase (331 aa).

55–57 (DGE) contacts ATP. Mg(2+) is bound by residues His-148 and Asp-187. Residue Lys-211 is part of the active site. D-ribose 5-phosphate is bound by residues Arg-213, Asp-237, and 241–245 (DTGGT).

This sequence belongs to the ribose-phosphate pyrophosphokinase family. Class I subfamily. In terms of assembly, homohexamer. The cofactor is Mg(2+).

It localises to the cytoplasm. It carries out the reaction D-ribose 5-phosphate + ATP = 5-phospho-alpha-D-ribose 1-diphosphate + AMP + H(+). The protein operates within metabolic intermediate biosynthesis; 5-phospho-alpha-D-ribose 1-diphosphate biosynthesis; 5-phospho-alpha-D-ribose 1-diphosphate from D-ribose 5-phosphate (route I): step 1/1. Involved in the biosynthesis of the central metabolite phospho-alpha-D-ribosyl-1-pyrophosphate (PRPP) via the transfer of pyrophosphoryl group from ATP to 1-hydroxyl of ribose-5-phosphate (Rib-5-P). The chain is Ribose-phosphate pyrophosphokinase from Prochlorococcus marinus subsp. pastoris (strain CCMP1986 / NIES-2087 / MED4).